Reading from the N-terminus, the 273-residue chain is Eukaryotic translation initiation factor 3 subunit G-2 (273 aa).

Residues 165–193 form a disordered region; it reads KYVPPFMKDGGGGPGGKNWGRGRERDDSS. A compositionally biased stretch (gly residues) spans 173–183; it reads DGGGGPGGKNW. The RRM domain maps to 193–271; the sequence is SAVRISNLSE…LILCVEWSKP (79 aa).

This sequence belongs to the eIF-3 subunit G family. Component of the eukaryotic translation initiation factor 3 (eIF-3) complex. The eIF-3 complex interacts with pix.

It localises to the cytoplasm. Its function is as follows. RNA-binding component of the eukaryotic translation initiation factor 3 (eIF-3) complex, which is involved in protein synthesis of a specialized repertoire of mRNAs and, together with other initiation factors, stimulates binding of mRNA and methionyl-tRNAi to the 40S ribosome. The eIF-3 complex specifically targets and initiates translation of a subset of mRNAs involved in cell proliferation. This subunit can bind 18S rRNA. This is Eukaryotic translation initiation factor 3 subunit G-2 from Drosophila yakuba (Fruit fly).